The sequence spans 215 residues: Pyridoxine/pyridoxamine 5'-phosphate oxidase (215 aa).

Residues 9-12 (RKEY) and lysine 67 contribute to the substrate site. FMN is bound by residues 62–67 (RIVLLK), 77–78 (YT), lysine 84, and glutamine 106. Substrate contacts are provided by tyrosine 124, arginine 128, and serine 132. Residues 141–142 (QS) and tryptophan 187 each bind FMN. Residue 193–195 (RLH) coordinates substrate. Residue arginine 197 coordinates FMN.

It belongs to the pyridoxamine 5'-phosphate oxidase family. As to quaternary structure, homodimer. FMN is required as a cofactor.

The catalysed reaction is pyridoxamine 5'-phosphate + O2 + H2O = pyridoxal 5'-phosphate + H2O2 + NH4(+). It catalyses the reaction pyridoxine 5'-phosphate + O2 = pyridoxal 5'-phosphate + H2O2. Its pathway is cofactor metabolism; pyridoxal 5'-phosphate salvage; pyridoxal 5'-phosphate from pyridoxamine 5'-phosphate: step 1/1. It participates in cofactor metabolism; pyridoxal 5'-phosphate salvage; pyridoxal 5'-phosphate from pyridoxine 5'-phosphate: step 1/1. Functionally, catalyzes the oxidation of either pyridoxine 5'-phosphate (PNP) or pyridoxamine 5'-phosphate (PMP) into pyridoxal 5'-phosphate (PLP). The polypeptide is Pyridoxine/pyridoxamine 5'-phosphate oxidase (Cytophaga hutchinsonii (strain ATCC 33406 / DSM 1761 / CIP 103989 / NBRC 15051 / NCIMB 9469 / D465)).